The chain runs to 506 residues: Apolipoprotein N-acyltransferase (506 aa).

6 helical membrane-spanning segments follow: residues 24–44, 58–78, 85–105, 125–145, 162–182, and 192–212; these read LALA…MFYL, GWCY…VSIH, ALLA…FFAL, LAFA…LTGF, LAPV…AALL, and KSFL…GLAL. The region spanning 230-470 is the CN hydrolase domain; the sequence is MQGNIEQSMK…RGVLYGEVVP (241 aa). Glu269 functions as the Proton acceptor in the catalytic mechanism. Residue Lys330 is part of the active site. The active-site Nucleophile is the Cys382. Residues 482–502 form a helical membrane-spanning segment; the sequence is SWPLAIVCLLLFGWALLAARI.

It belongs to the CN hydrolase family. Apolipoprotein N-acyltransferase subfamily.

The protein localises to the cell inner membrane. It catalyses the reaction N-terminal S-1,2-diacyl-sn-glyceryl-L-cysteinyl-[lipoprotein] + a glycerophospholipid = N-acyl-S-1,2-diacyl-sn-glyceryl-L-cysteinyl-[lipoprotein] + a 2-acyl-sn-glycero-3-phospholipid + H(+). The protein operates within protein modification; lipoprotein biosynthesis (N-acyl transfer). In terms of biological role, catalyzes the phospholipid dependent N-acylation of the N-terminal cysteine of apolipoprotein, the last step in lipoprotein maturation. The polypeptide is Apolipoprotein N-acyltransferase (Pseudomonas syringae pv. tomato (strain ATCC BAA-871 / DC3000)).